Consider the following 182-residue polypeptide: Lipoprotein signal peptidase (182 aa).

3 helical membrane passes run 21–41 (LLLS…VLAV), 74–94 (GYTW…FWMG), and 98–118 (VSPW…GNLV). Residues aspartate 134 and aspartate 148 contribute to the active site. A helical membrane pass occupies residues 146-166 (VADPSVVGGAILLVVLSIFGY).

Belongs to the peptidase A8 family.

It is found in the cell membrane. The catalysed reaction is Release of signal peptides from bacterial membrane prolipoproteins. Hydrolyzes -Xaa-Yaa-Zaa-|-(S,diacylglyceryl)Cys-, in which Xaa is hydrophobic (preferably Leu), and Yaa (Ala or Ser) and Zaa (Gly or Ala) have small, neutral side chains.. It participates in protein modification; lipoprotein biosynthesis (signal peptide cleavage). Functionally, this protein specifically catalyzes the removal of signal peptides from prolipoproteins. The chain is Lipoprotein signal peptidase from Mycobacterium avium (strain 104).